Reading from the N-terminus, the 285-residue chain is MTASVLLHSHWIDPVMFLYENGLDERNKNMEGFTGSNFPANQCRNLLAHPTSLAPNTTYTSNDVPISGIGEPGKQCSPCPATQSSPNASLPYGYFGSSYYPCRVSHGSVKACAQPSGYGDKYMDSPVSGEEFSSRAKEYAFYQGYSSAPYQPSYLDVPVVPALSAPSETRHEPLLPMEPYQPWTITNGWSGQVYCTKEQPQSNPLWKSSLQGNSGVRRGRKKRVPYTKVQLKELEREYAANKFITKDKRRRISAQTNLTERQVTIWFQNRRVKEKKVVNKFKSPS.

A DNA-binding region (homeobox) is located at residues 219–278 (GRKKRVPYTKVQLKELEREYAANKFITKDKRRRISAQTNLTERQVTIWFQNRRVKEKKVV).

The protein belongs to the Abd-B homeobox family.

The protein localises to the nucleus. Its function is as follows. Sequence-specific transcription factor which is part of a developmental regulatory system that provides cells with specific positional identities on the anterior-posterior axis. The protein is Homeobox protein Hox-A13b (hoxa13b) of Takifugu rubripes (Japanese pufferfish).